Here is a 456-residue protein sequence, read N- to C-terminus: Outer membrane protein assembly factor BamB (456 aa).

The signal sequence occupies residues 1–19; the sequence is MKKLLFITAPLLLSVLTAS. Cysteine 20 carries N-palmitoyl cysteine lipidation. Cysteine 20 is lipidated: S-diacylglycerol cysteine.

Belongs to the BamB family. In terms of assembly, part of the Bam complex.

The protein resides in the cell outer membrane. In terms of biological role, part of the outer membrane protein assembly complex, which is involved in assembly and insertion of beta-barrel proteins into the outer membrane. The polypeptide is Outer membrane protein assembly factor BamB (Francisella tularensis subsp. tularensis (strain SCHU S4 / Schu 4)).